Here is a 525-residue protein sequence, read N- to C-terminus: Peptide chain release factor 3 (525 aa).

One can recognise a tr-type G domain in the interval 11–279 (ERRRTFAIIS…AFVDMAPAPE (269 aa)). GTP-binding positions include 20 to 27 (SHPDAGKT), 88 to 92 (DTPGH), and 142 to 145 (NKLD).

It belongs to the TRAFAC class translation factor GTPase superfamily. Classic translation factor GTPase family. PrfC subfamily.

Its subcellular location is the cytoplasm. In terms of biological role, increases the formation of ribosomal termination complexes and stimulates activities of RF-1 and RF-2. It binds guanine nucleotides and has strong preference for UGA stop codons. It may interact directly with the ribosome. The stimulation of RF-1 and RF-2 is significantly reduced by GTP and GDP, but not by GMP. This is Peptide chain release factor 3 from Latilactobacillus sakei subsp. sakei (strain 23K) (Lactobacillus sakei subsp. sakei).